The sequence spans 448 residues: MKSSVEKLSETRVKLNVEVPFEELKPEIDQAYKALAQQITIPGFRRGKAPRQLIDARIGRGAVLEQVINDMLPTRYQQVVEENELVVLGQPHIDITKLEDNEVVEFTAEVDVRPEITVPDFSAFAVEVPALKSNDEAIDAQIDKLRERFGELKDTKRKLKTDDFAIIDIEAAIDGEKLEEATTEGMSYQVGAGDLIDGLDTALRGLKAGESAEFTTTLKAGEHEGKEAAVTVTVQQTKERKLPELDEEFVQTASEFDTVEELRESIAEQVAEQAKAEQATAIRDEVLKAALAEATFELPEGVVEDQIHAQLHQLLNQVGGDEAALNAALEAQGTSREQFDADNRKNSEEAVRTQLFLDALAEQEQPEVSQQELTDHILFTAQSYGMDPNQFITQLQQSGQIGNLFSDVRRGKALAAAICRVSVKDDEGKAVDPSEYFGEEEESAEESE.

The PPIase FKBP-type domain occupies 162-243; the sequence is DDFAIIDIEA…VQQTKERKLP (82 aa). A disordered region spans residues 426-448; that stretch reads DEGKAVDPSEYFGEEEESAEESE. Residues 437 to 448 are compositionally biased toward acidic residues; that stretch reads FGEEEESAEESE.

It belongs to the FKBP-type PPIase family. Tig subfamily.

Its subcellular location is the cytoplasm. It catalyses the reaction [protein]-peptidylproline (omega=180) = [protein]-peptidylproline (omega=0). Its function is as follows. Involved in protein export. Acts as a chaperone by maintaining the newly synthesized protein in an open conformation. Functions as a peptidyl-prolyl cis-trans isomerase. The protein is Trigger factor of Corynebacterium diphtheriae (strain ATCC 700971 / NCTC 13129 / Biotype gravis).